A 96-amino-acid chain; its full sequence is Small ribosomal subunit protein bS6 (96 aa).

The protein belongs to the bacterial ribosomal protein bS6 family.

Binds together with bS18 to 16S ribosomal RNA. The polypeptide is Small ribosomal subunit protein bS6 (Streptococcus sanguinis (strain SK36)).